Here is a 357-residue protein sequence, read N- to C-terminus: Alanine racemase (357 aa).

The active-site Proton acceptor; specific for D-alanine is the Lys33. Lys33 is modified (N6-(pyridoxal phosphate)lysine). Residue Arg129 participates in substrate binding. The active-site Proton acceptor; specific for L-alanine is Tyr253. Met301 is a binding site for substrate.

Belongs to the alanine racemase family. Pyridoxal 5'-phosphate is required as a cofactor.

It catalyses the reaction L-alanine = D-alanine. Its pathway is amino-acid biosynthesis; D-alanine biosynthesis; D-alanine from L-alanine: step 1/1. In terms of biological role, catalyzes the interconversion of L-alanine and D-alanine. May also act on other amino acids. The chain is Alanine racemase (alr) from Pseudomonas fluorescens (strain ATCC BAA-477 / NRRL B-23932 / Pf-5).